The primary structure comprises 444 residues: ATPase PAAT (444 aa).

Phosphoserine occurs at positions 177, 182, and 254. Residues Ser-279–Asn-300 form a disordered region. The span at Ala-280–Thr-289 shows a compositional bias: polar residues. Ser-302 carries the post-translational modification Phosphoserine. A disordered region spans residues Pro-424–Arg-444. Basic and acidic residues predominate over residues Arg-431 to Arg-444.

As to quaternary structure, homodimer. Interacts with ABCB7, ABCB8/MITOSUR and ABCB10.

It localises to the cytoplasm. The protein localises to the mitochondrion. It catalyses the reaction ATP + H2O = ADP + phosphate + H(+). Its function is as follows. ATPase that regulates mitochondrial ABC transporters ABCB7, ABCB8/MITOSUR and ABCB10. Regulates mitochondrial ferric concentration and heme biosynthesis and plays a role in the maintenance of mitochondrial homeostasis and cell survival. The polypeptide is ATPase PAAT (Mus musculus (Mouse)).